The chain runs to 157 residues: MEKIPMTGAGFVALEEELRFRQQVERPRIISAISEARAHGDLSENAEYHAAKELQSLNEGRIAELEDKISRAEVIDVSKLSGDIVKFGATVTLVDEDTEEERVWQIVGDSEADAKAGRISISSPVARALIGKKKGSSVEVVTPKGARSFEIVEVRWA.

The protein belongs to the GreA/GreB family.

Necessary for efficient RNA polymerase transcription elongation past template-encoded arresting sites. The arresting sites in DNA have the property of trapping a certain fraction of elongating RNA polymerases that pass through, resulting in locked ternary complexes. Cleavage of the nascent transcript by cleavage factors such as GreA or GreB allows the resumption of elongation from the new 3'terminus. GreA releases sequences of 2 to 3 nucleotides. The protein is Transcription elongation factor GreA of Azorhizobium caulinodans (strain ATCC 43989 / DSM 5975 / JCM 20966 / LMG 6465 / NBRC 14845 / NCIMB 13405 / ORS 571).